A 558-amino-acid chain; its full sequence is Atlastin-1 (558 aa).

Residues methionine 1–valine 29 form a disordered region. Residues methionine 1–proline 34 are N-terminal hypervariable region (HVR). The Cytoplasmic segment spans residues methionine 1–alanine 449. Serine 10, serine 22, and serine 23 each carry phosphoserine. One can recognise a GB1/RHD3-type G domain in the interval aspartate 64–serine 309. Positions 77, 78, 79, 80, 81, 82, 148, 217, 218, 276, and 279 each coordinate GDP. GTP contacts are provided by arginine 77, lysine 78, glycine 79, lysine 80, serine 81, and phenylalanine 82. Residue serine 81 coordinates Mg(2+). GTP is bound by residues arginine 217, aspartate 218, and valine 276. The interval methionine 347–serine 438 is 3HB (three-helix bundle) domain. Lysine 395 bears the N6-acetyllysine mark. A coiled-coil region spans residues glutamate 412–lysine 439. Positions lysine 439–threonine 447 are linker. Residues threonine 450–leucine 470 traverse the membrane as a helical segment. Aspartate 471 is a topological domain (lumenal). The helical transmembrane segment at isoleucine 472–alanine 492 threads the bilayer. Residues tyrosine 493–isoleucine 558 lie on the Cytoplasmic side of the membrane. Residues asparagine 521–isoleucine 558 are autoinhibitory domain.

Belongs to the TRAFAC class dynamin-like GTPase superfamily. GB1/RHD3 GTPase family. GB1 subfamily. As to quaternary structure, monomeric and homodimeric. The homodimer, transiently formed by two molecules on opposing membranes, is the active form mediating ER membrane fusion. Interacts with REEP1, REEP5, RTN3 and RTN4 (via the transmembrane region); these proteins are involved in endoplasmic reticulum tubular network organization. Interacts with ZFYVE27; both proteins are involved in endoplasmic reticulum tubular network organization. Interacts with ARL6IP1; both proteins are involved in endoplasmic reticulum tubular network organization. Interacts with SPAST; the interaction is direct, could recruit SPAST to Golgi membranes. Interacts (via N-terminal region) with MAP4K4 (via CNH regulatory domain). May interact with TMED2. Interacts with CPT1C. In terms of processing, phosphorylated. Phosphorylation, by different kinases, of the N-terminal hypervariable region (HVR) regulates the ATL1-mediated membrane tethering step. In terms of tissue distribution, detected in brain where it is abundant in lamina V of the cerebral cortex. Also expressed within the hippocampus, mainly in pyramidal neurons in CA1 and CA3. Weakly expressed in the striatum and more robustly in amygdala and several thalamic nuclei. Also detected in several mesopontine nuclei (at protein level).

It localises to the endoplasmic reticulum membrane. It is found in the golgi apparatus membrane. The protein resides in the cell projection. The protein localises to the axon. The enzyme catalyses GTP + H2O = GDP + phosphate + H(+). Atlastin-1 (ATL1) is a membrane-anchored GTPase that mediates the GTP-dependent fusion of endoplasmic reticulum (ER) membranes, maintaining the continuous ER network. It facilitates the formation of three-way junctions where ER tubules intersect. Two atlastin-1 on neighboring ER tubules bind GTP and form loose homodimers through the GB1/RHD3-type G domains and 3HB regions. Upon GTP hydrolysis, the 3HB regions tighten, pulling the membranes together to drive their fusion. After fusion, the homodimer disassembles upon release of inorganic phosphate (Pi). Subsequently, GDP dissociates, resetting the monomers to a conformation ready for a new fusion cycle. May also regulate more or less directly Golgi biogenesis. Indirectly regulates axonal development. This is Atlastin-1 from Rattus norvegicus (Rat).